Here is a 547-residue protein sequence, read N- to C-terminus: MTKSVGDEESQYIEDPSFAAAAAFTGGRDGVSYSNQRFAEGSGHSSDLAKSLEDYRPPDEKPSSLSSVGEGGANEEEKGGNDGGPLARIQTGLFSPRLRNHRKKILSKFVLNNFFIACVCVSLISIYWGACYGTDRYFFKVKNIVVLQDAPSNTSVQSISAIIPSLLASVPGTWHIYNATSFHRKFGTTNSTEIDRKIVDLIYDERYWLALNVKPNATDTLYNSLISQDANSEFNSSIFFESVFESGRDPSSVKSTILPLMQQLEVRLQKYYVKEYLPSLMSNITSNDRDLNINMENWAIAGQLLFTYNDYRPFADRILMAPLQVGLIYCILLTVLQLSLYGKLHGEMARVLKPKHILIYRLLISWATYFLLSIGFCTVSAIFRIDFTPAFGRGGFVVYWMSTWLVMMAVGGANENVLSLVIAYCPPYLSIWLMTWIILNISASFYPMVLNNEFYRYGYIMPIHNAVDIYKVIFLNLTKRKMGRNYGILVAWVALNTSLMPFCMKFAGKKMQKNAMQAAEAAVAAATQRASRPAEANTDKNNNPPGN.

The disordered stretch occupies residues 35-86; sequence NQRFAEGSGHSSDLAKSLEDYRPPDEKPSSLSSVGEGGANEEEKGGNDGGPL. Basic and acidic residues predominate over residues 50–62; that stretch reads KSLEDYRPPDEKP. Thr91 bears the Phosphothreonine mark. Transmembrane regions (helical) follow at residues 109–129, 159–179, 318–338, 363–383, 394–414, 418–438, 457–477, and 488–508; these read FVLN…IYWG, ISAI…IYNA, ILMA…VLQL, LISW…SAIF, GGFV…GGAN, LSLV…TWII, YGYI…FLNL, and ILVA…KFAG. Residues 526–536 are compositionally biased toward low complexity; it reads ATQRASRPAEA. The interval 526 to 547 is disordered; that stretch reads ATQRASRPAEANTDKNNNPPGN.

The protein to yeast YJR015W.

The protein localises to the membrane. May function as a N-methyl-N'nitro-N-nitrosoguanidine (MNNG) export permease. This chain is Nitrosoguanidine resistance protein SNG1 (SNG1), found in Saccharomyces cerevisiae (strain ATCC 204508 / S288c) (Baker's yeast).